The following is a 192-amino-acid chain: Adenylate kinase (192 aa).

An ATP-binding site is contributed by 10–18; sequence GVPGVGSTT.

This sequence belongs to the archaeal adenylate kinase family. Monomer.

Its subcellular location is the cytoplasm. It catalyses the reaction AMP + ATP = 2 ADP. In Methanococcus vannielii (strain ATCC 35089 / DSM 1224 / JCM 13029 / OCM 148 / SB), this protein is Adenylate kinase.